A 1291-amino-acid polypeptide reads, in one-letter code: Cytoplasmic FMR1-interacting protein (1291 aa).

Residues 1269 to 1291 (HPSVISSSSHYQDPQKLRQSMNN) form a disordered region. The span at 1271–1291 (SVISSSSHYQDPQKLRQSMNN) shows a compositional bias: polar residues.

This sequence belongs to the CYFIP family. In terms of assembly, interacts with Fmr1 and Rac1. Component of the WAVE complex composed of Hem/Kette, Scar/Wave and Cyfip where it binds through its C-terminus directly to Hem.

It is found in the cytoplasm. Plays a role in guidance and morphology of central and peripheral axons and in synaptic morphology. Also required for formation of cell membrane protrusions and for bristle development. This chain is Cytoplasmic FMR1-interacting protein, found in Drosophila pseudoobscura pseudoobscura (Fruit fly).